A 204-amino-acid chain; its full sequence is Somatotropin (204 aa).

An N-terminal signal peptide occupies residues 1–17; sequence MDKVLFLLFVLSLGVSS. Glutamine 18 carries the post-translational modification Pyrrolidone carboxylic acid. Histidine 36 is a Zn(2+) binding site. A disulfide bond links cysteine 69 and cysteine 177. Glutamate 186 provides a ligand contact to Zn(2+). A disulfide bond links cysteine 194 and cysteine 202.

This sequence belongs to the somatotropin/prolactin family.

The protein resides in the secreted. Growth hormone plays an important role in growth control and is involved in the regulation of several anabolic processes. Implicated as an osmoregulatory substance important for seawater adaptation. The protein is Somatotropin (gh) of Trichopodus trichopterus (Three spot gourami).